The following is a 1373-amino-acid chain: DNA-directed RNA polymerase subunit beta (1373 aa).

The protein belongs to the RNA polymerase beta chain family. As to quaternary structure, the RNAP catalytic core consists of 2 alpha, 1 beta, 1 beta' and 1 omega subunit. When a sigma factor is associated with the core the holoenzyme is formed, which can initiate transcription.

The enzyme catalyses RNA(n) + a ribonucleoside 5'-triphosphate = RNA(n+1) + diphosphate. Functionally, DNA-dependent RNA polymerase catalyzes the transcription of DNA into RNA using the four ribonucleoside triphosphates as substrates. The polypeptide is DNA-directed RNA polymerase subunit beta (Lawsonia intracellularis (strain PHE/MN1-00)).